The chain runs to 247 residues: Probable cyclic nucleotide phosphodiesterase XBJ1_0953 (247 aa).

Fe cation-binding residues include aspartate 8, histidine 10, aspartate 52, asparagine 82, histidine 154, histidine 192, and histidine 194. Residues histidine 10, aspartate 52, and 82–83 (NH) each bind AMP. Position 194 (histidine 194) interacts with AMP.

This sequence belongs to the cyclic nucleotide phosphodiesterase class-III family. Fe(2+) is required as a cofactor.

In Xenorhabdus bovienii (strain SS-2004) (Xenorhabdus nematophila subsp. bovienii), this protein is Probable cyclic nucleotide phosphodiesterase XBJ1_0953.